Reading from the N-terminus, the 147-residue chain is MRIYLRVVLPLSLALNSYGVLAFFWGERGVCAMRLLEREKKELVHHIQTLAERGRDLAAVVDALSFDEETIGAYARQLGYVRAGDVLVRPVNFTVAHMHTLDSGDARPLVAPACFSDTRCKVYALCVGFFVVLLQLLWGSARAYFKT.

The next 2 membrane-spanning stretches (helical) occupy residues 4–26 and 123–145; these read YLRV…FFWG and YALC…RAYF.

The protein localises to the cell membrane. This is an uncharacterized protein from Treponema pallidum (strain Nichols).